Consider the following 600-residue polypeptide: ATP-dependent zinc metalloprotease FtsH 1 (600 aa).

Residues 1–8 lie on the Cytoplasmic side of the membrane; sequence MKTHYFKK. The helical transmembrane segment at 9–29 threads the bilayer; sequence IFNLKFLVIFFSILFCILLIL. At 30–130 the chain is on the extracellular side; it reads DLTFERRIKG…PKTDFHLSEL (101 aa). The chain crosses the membrane as a helical span at residues 131 to 151; sequence ILSLVPIVSSTIFMFYIISNI. The Cytoplasmic segment spans residues 152–600; that stretch reads KKSSGKLNSN…IEQLVVNTKK (449 aa). Position 215-222 (215-222) interacts with ATP; the sequence is GPPGTGKT. His-437 provides a ligand contact to Zn(2+). Glu-438 is a catalytic residue. Residues His-441 and Asp-513 each contribute to the Zn(2+) site.

The protein in the central section; belongs to the AAA ATPase family. In the C-terminal section; belongs to the peptidase M41 family. In terms of assembly, homohexamer. Zn(2+) is required as a cofactor.

It localises to the cell membrane. Its function is as follows. Acts as a processive, ATP-dependent zinc metallopeptidase for both cytoplasmic and membrane proteins. Plays a role in the quality control of integral membrane proteins. In Phytoplasma mali (strain AT), this protein is ATP-dependent zinc metalloprotease FtsH 1.